The sequence spans 204 residues: MTINYPVGTHHGKTLKNNTLRTGKTTKKVLFGKRGMGLEDEINLANDYYLANRLAVVHKKPTPITIVKVDYPARSAAKITEAYFKQASTTDYNGVYQGKYIDFDAKETKNKTSFPLKNFHEHQISHLASILSQGGIGFVIIKFTSLNENYVYPASELIQQWQHLNGKQSISYQEIVDKSFVVPESLNPSLDYLTAVDKMLEALH.

Residues threonine 89, aspartate 91, aspartate 104, and glutamine 123 each contribute to the Mg(2+) site.

Belongs to the RecU family. Mg(2+) is required as a cofactor.

Its subcellular location is the cytoplasm. It carries out the reaction Endonucleolytic cleavage at a junction such as a reciprocal single-stranded crossover between two homologous DNA duplexes (Holliday junction).. Functionally, endonuclease that resolves Holliday junction intermediates in genetic recombination. Cleaves mobile four-strand junctions by introducing symmetrical nicks in paired strands. Promotes annealing of linear ssDNA with homologous dsDNA. Required for DNA repair, homologous recombination and chromosome segregation. The sequence is that of Holliday junction resolvase RecU from Leuconostoc mesenteroides subsp. mesenteroides (strain ATCC 8293 / DSM 20343 / BCRC 11652 / CCM 1803 / JCM 6124 / NCDO 523 / NBRC 100496 / NCIMB 8023 / NCTC 12954 / NRRL B-1118 / 37Y).